Here is a 486-residue protein sequence, read N- to C-terminus: Malonate-semialdehyde dehydrogenase (486 aa).

NAD(+) is bound by residues phenylalanine 154, lysine 178, glutamate 181, arginine 182, and serine 231. Cysteine 286 (nucleophile) is an active-site residue. Residue glutamate 386 coordinates NAD(+).

Belongs to the aldehyde dehydrogenase family. IolA subfamily. Homotetramer.

The enzyme catalyses 3-oxopropanoate + NAD(+) + CoA + H2O = hydrogencarbonate + acetyl-CoA + NADH + H(+). It catalyses the reaction 2-methyl-3-oxopropanoate + NAD(+) + CoA + H2O = propanoyl-CoA + hydrogencarbonate + NADH + H(+). The protein operates within polyol metabolism; myo-inositol degradation into acetyl-CoA; acetyl-CoA from myo-inositol: step 7/7. Its function is as follows. Catalyzes the oxidation of malonate semialdehyde (MSA) and methylmalonate semialdehyde (MMSA) into acetyl-CoA and propanoyl-CoA, respectively. Is involved in a myo-inositol catabolic pathway. Bicarbonate, and not CO2, is the end-product of the enzymatic reaction. The chain is Malonate-semialdehyde dehydrogenase from Bacillus cereus (strain G9842).